We begin with the raw amino-acid sequence, 305 residues long: Probable lipid kinase YegS-like (305 aa).

The region spanning 1-129 (MTQRRAMLIL…VDLGEVGGKL (129 aa)) is the DAGKc domain. Residues threonine 39, 65–71 (GDGTLRD), and threonine 92 each bind ATP. Leucine 210, aspartate 213, and leucine 215 together coordinate Mg(2+). Glutamate 268 serves as the catalytic Proton acceptor.

Belongs to the diacylglycerol/lipid kinase family. YegS lipid kinase subfamily. Mg(2+) is required as a cofactor. Ca(2+) serves as cofactor.

The protein localises to the cytoplasm. Its function is as follows. Probably phosphorylates lipids; the in vivo substrate is unknown. The protein is Probable lipid kinase YegS-like of Pseudomonas savastanoi pv. phaseolicola (strain 1448A / Race 6) (Pseudomonas syringae pv. phaseolicola (strain 1448A / Race 6)).